The chain runs to 318 residues: Probable cell division protein WhiA (318 aa).

The segment at residues 276–310 (TLQELGEMVESGSISKSGINHRLRKIDQIADKIRN) is a DNA-binding region (H-T-H motif).

It belongs to the WhiA family.

Involved in cell division and chromosome segregation. The polypeptide is Probable cell division protein WhiA (Exiguobacterium sibiricum (strain DSM 17290 / CCUG 55495 / CIP 109462 / JCM 13490 / 255-15)).